A 432-amino-acid chain; its full sequence is Glutamate-1-semialdehyde 2,1-aminomutase (432 aa).

Lysine 267 is subject to N6-(pyridoxal phosphate)lysine.

Belongs to the class-III pyridoxal-phosphate-dependent aminotransferase family. HemL subfamily. Homodimer. The cofactor is pyridoxal 5'-phosphate.

The protein resides in the cytoplasm. It carries out the reaction (S)-4-amino-5-oxopentanoate = 5-aminolevulinate. It functions in the pathway porphyrin-containing compound metabolism; protoporphyrin-IX biosynthesis; 5-aminolevulinate from L-glutamyl-tRNA(Glu): step 2/2. The protein is Glutamate-1-semialdehyde 2,1-aminomutase of Syntrophus aciditrophicus (strain SB).